A 276-amino-acid polypeptide reads, in one-letter code: Large ribosomal subunit protein uL2 (276 aa).

The disordered stretch occupies residues 218–276; that stretch reads PYVRGSAMNPVDHPHGGGEGRAPIGRPAPSTPWGKPALGLKTRKKNKKSNKYIVRRRKK. Over residues 258–276 the composition is skewed to basic residues; the sequence is KTRKKNKKSNKYIVRRRKK.

The protein belongs to the universal ribosomal protein uL2 family. In terms of assembly, part of the 50S ribosomal subunit. Forms a bridge to the 30S subunit in the 70S ribosome.

Functionally, one of the primary rRNA binding proteins. Required for association of the 30S and 50S subunits to form the 70S ribosome, for tRNA binding and peptide bond formation. It has been suggested to have peptidyltransferase activity; this is somewhat controversial. Makes several contacts with the 16S rRNA in the 70S ribosome. This is Large ribosomal subunit protein uL2 from Finegoldia magna (strain ATCC 29328 / DSM 20472 / WAL 2508) (Peptostreptococcus magnus).